A 274-amino-acid polypeptide reads, in one-letter code: MIHWEQSRTLLSFPQVGLHLSWYGIFFSLGIFLSSFAGIRLATVLCKDPNMRKELKTGLENFALGALLVIVIGARAFYVLFYGGSFYFENPSEIIKIWKGGLSSHGAIIALVIWSAAFSRFHIRRLPMLSVTYICDICGAVFGVAALLIRVGNFMNQEILGTPTSMPWGVVFANDSSLIARHPVQLYEGVSYLLLSLVLYWLCYRGSIRLGSGYSAAGALIGVASIRFCAEFFKTHQGSWLGEESLLTIGQWLSIPMVFLGIGILWIASKKREP.

4 helical membrane-spanning segments follow: residues 16–36 (VGLH…LSSF), 62–82 (FALG…VLFY), 94–114 (IIKI…LVIW), and 129–149 (LSVT…ALLI). Arg150 serves as a coordination point for a 1,2-diacyl-sn-glycero-3-phospho-(1'-sn-glycerol). 3 consecutive transmembrane segments (helical) span residues 184–204 (VQLY…WLCY), 213–233 (GYSA…AEFF), and 247–267 (LTIG…ILWI).

This sequence belongs to the Lgt family.

The protein resides in the cell inner membrane. The enzyme catalyses L-cysteinyl-[prolipoprotein] + a 1,2-diacyl-sn-glycero-3-phospho-(1'-sn-glycerol) = an S-1,2-diacyl-sn-glyceryl-L-cysteinyl-[prolipoprotein] + sn-glycerol 1-phosphate + H(+). The protein operates within protein modification; lipoprotein biosynthesis (diacylglyceryl transfer). In terms of biological role, catalyzes the transfer of the diacylglyceryl group from phosphatidylglycerol to the sulfhydryl group of the N-terminal cysteine of a prolipoprotein, the first step in the formation of mature lipoproteins. This Chlamydia muridarum (strain MoPn / Nigg) protein is Phosphatidylglycerol--prolipoprotein diacylglyceryl transferase.